Here is a 333-residue protein sequence, read N- to C-terminus: Ornithine carbamoyltransferase (333 aa).

Residues 56–59 (STRT), Gln-83, Arg-107, and 134–137 (HPTQ) each bind carbamoyl phosphate. Residues Asn-167, Asp-231, and 235–236 (SM) contribute to the L-ornithine site. Residues 273–274 (CL) and Arg-318 each bind carbamoyl phosphate.

It belongs to the aspartate/ornithine carbamoyltransferase superfamily. OTCase family.

The protein resides in the cytoplasm. The catalysed reaction is carbamoyl phosphate + L-ornithine = L-citrulline + phosphate + H(+). The protein operates within amino-acid biosynthesis; L-arginine biosynthesis; L-arginine from L-ornithine and carbamoyl phosphate: step 1/3. Its function is as follows. Reversibly catalyzes the transfer of the carbamoyl group from carbamoyl phosphate (CP) to the N(epsilon) atom of ornithine (ORN) to produce L-citrulline. In Staphylococcus aureus (strain MSSA476), this protein is Ornithine carbamoyltransferase.